The sequence spans 256 residues: DNA repair protein RecO (256 aa).

It belongs to the RecO family.

In terms of biological role, involved in DNA repair and RecF pathway recombination. In Rhizobium etli (strain CIAT 652), this protein is DNA repair protein RecO.